Reading from the N-terminus, the 627-residue chain is RNA interference defective protein 10 (627 aa).

Disordered regions lie at residues 1–31, 467–487, and 523–589; these read MSNH…VRQN, QRDT…HDQY, and SSVR…SEDY. Basic and acidic residues-rich tracts occupy residues 7 to 16, 467 to 478, and 526 to 537; these read NFRDYQREGI, QRDTDEQYDVHQ, and REPEHPSARSRD.

It belongs to the maelstrom family. As to quaternary structure, interacts with rde-11 (via RING-type zinc finger domain). Interacts with ergo-1.

In terms of biological role, in complex with rde-11, required in the endogenous and exogenous siRNA pathway for biogenesis and accumulation of secondary small interfering RNA (siRNA) intermediates, such as 22G-siRNAs derived from ergo-1 targets. The sequence is that of RNA interference defective protein 10 from Caenorhabditis elegans.